Reading from the N-terminus, the 167-residue chain is NAD(P)H-quinone oxidoreductase subunit I, chloroplastic (167 aa).

2 4Fe-4S ferredoxin-type domains span residues 55-84 and 95-124; these read GRIHFEFDKCIACEVCVRVCPIDLPVVDWK and LNYSIDFGICIFCGNCVEYCPTNCLSMTEE. C64, C67, C70, C74, C104, C107, C110, and C114 together coordinate [4Fe-4S] cluster.

This sequence belongs to the complex I 23 kDa subunit family. In terms of assembly, NDH is composed of at least 16 different subunits, 5 of which are encoded in the nucleus. Requires [4Fe-4S] cluster as cofactor.

Its subcellular location is the plastid. The protein resides in the chloroplast thylakoid membrane. It catalyses the reaction a plastoquinone + NADH + (n+1) H(+)(in) = a plastoquinol + NAD(+) + n H(+)(out). The catalysed reaction is a plastoquinone + NADPH + (n+1) H(+)(in) = a plastoquinol + NADP(+) + n H(+)(out). Its function is as follows. NDH shuttles electrons from NAD(P)H:plastoquinone, via FMN and iron-sulfur (Fe-S) centers, to quinones in the photosynthetic chain and possibly in a chloroplast respiratory chain. The immediate electron acceptor for the enzyme in this species is believed to be plastoquinone. Couples the redox reaction to proton translocation, and thus conserves the redox energy in a proton gradient. The protein is NAD(P)H-quinone oxidoreductase subunit I, chloroplastic of Pelargonium hortorum (Common geranium).